The primary structure comprises 124 residues: UPF0231 protein Shewana3_0655 (124 aa).

This sequence belongs to the UPF0231 family.

This Shewanella sp. (strain ANA-3) protein is UPF0231 protein Shewana3_0655.